A 457-amino-acid polypeptide reads, in one-letter code: Bifunctional protein GlmU (457 aa).

The tract at residues 1-229 (MSNSAKSVVI…HSEMEGVNNR (229 aa)) is pyrophosphorylase. Residues 11 to 14 (LAAG), Lys-25, Gln-76, 81 to 82 (GT), 103 to 105 (YGD), Gly-140, Glu-154, Asn-169, and Asn-227 contribute to the UDP-N-acetyl-alpha-D-glucosamine site. Position 105 (Asp-105) interacts with Mg(2+). Position 227 (Asn-227) interacts with Mg(2+). Residues 230–250 (LQLAALERIYQTEQAERLLLE) are linker. Positions 251-457 (GVMLLDPARF…GWKRPVKKKQ (207 aa)) are N-acetyltransferase. UDP-N-acetyl-alpha-D-glucosamine is bound by residues Arg-333 and Lys-351. Residue His-363 is the Proton acceptor of the active site. Tyr-366 and Asn-377 together coordinate UDP-N-acetyl-alpha-D-glucosamine. Acetyl-CoA is bound by residues Ala-380, 386 to 387 (NY), Ser-405, Ala-423, and Arg-440.

It in the N-terminal section; belongs to the N-acetylglucosamine-1-phosphate uridyltransferase family. In the C-terminal section; belongs to the transferase hexapeptide repeat family. As to quaternary structure, homotrimer. Mg(2+) is required as a cofactor.

It localises to the cytoplasm. It catalyses the reaction alpha-D-glucosamine 1-phosphate + acetyl-CoA = N-acetyl-alpha-D-glucosamine 1-phosphate + CoA + H(+). The catalysed reaction is N-acetyl-alpha-D-glucosamine 1-phosphate + UTP + H(+) = UDP-N-acetyl-alpha-D-glucosamine + diphosphate. It functions in the pathway nucleotide-sugar biosynthesis; UDP-N-acetyl-alpha-D-glucosamine biosynthesis; N-acetyl-alpha-D-glucosamine 1-phosphate from alpha-D-glucosamine 6-phosphate (route II): step 2/2. The protein operates within nucleotide-sugar biosynthesis; UDP-N-acetyl-alpha-D-glucosamine biosynthesis; UDP-N-acetyl-alpha-D-glucosamine from N-acetyl-alpha-D-glucosamine 1-phosphate: step 1/1. It participates in bacterial outer membrane biogenesis; LPS lipid A biosynthesis. Its function is as follows. Catalyzes the last two sequential reactions in the de novo biosynthetic pathway for UDP-N-acetylglucosamine (UDP-GlcNAc). The C-terminal domain catalyzes the transfer of acetyl group from acetyl coenzyme A to glucosamine-1-phosphate (GlcN-1-P) to produce N-acetylglucosamine-1-phosphate (GlcNAc-1-P), which is converted into UDP-GlcNAc by the transfer of uridine 5-monophosphate (from uridine 5-triphosphate), a reaction catalyzed by the N-terminal domain. The protein is Bifunctional protein GlmU of Proteus mirabilis (strain HI4320).